The sequence spans 101 residues: Phosphoribosyl-AMP cyclohydrolase (101 aa).

Asp-71 contacts Mg(2+). Cys-72 is a Zn(2+) binding site. Positions 73 and 75 each coordinate Mg(2+). Positions 88 and 95 each coordinate Zn(2+).

It belongs to the PRA-CH family. In terms of assembly, homodimer. Requires Mg(2+) as cofactor. Zn(2+) is required as a cofactor.

It is found in the cytoplasm. The enzyme catalyses 1-(5-phospho-beta-D-ribosyl)-5'-AMP + H2O = 1-(5-phospho-beta-D-ribosyl)-5-[(5-phospho-beta-D-ribosylamino)methylideneamino]imidazole-4-carboxamide. Its pathway is amino-acid biosynthesis; L-histidine biosynthesis; L-histidine from 5-phospho-alpha-D-ribose 1-diphosphate: step 3/9. In terms of biological role, catalyzes the hydrolysis of the adenine ring of phosphoribosyl-AMP. The polypeptide is Phosphoribosyl-AMP cyclohydrolase (Bacillus cereus (strain AH187)).